A 238-amino-acid polypeptide reads, in one-letter code: Sugar fermentation stimulation protein homolog (238 aa).

The protein belongs to the SfsA family.

The chain is Sugar fermentation stimulation protein homolog from Haemophilus influenzae (strain PittGG).